A 142-amino-acid chain; its full sequence is MAAKKVVKQIKLQVEAGKANPAPPVGPALGQAGLNIMEFCKQFNERSKAQIGLKLPVVITVFSDRSFTFITKSPPAALLVKKAIGLETGSATPHTHKVGKITRKQLEEIAKTKMEDLNANDIDAAVNIIAGTCRSMGVTVEA.

The protein belongs to the universal ribosomal protein uL11 family. In terms of assembly, part of the ribosomal stalk of the 50S ribosomal subunit. Interacts with L10 and the large rRNA to form the base of the stalk. L10 forms an elongated spine to which L12 dimers bind in a sequential fashion forming a multimeric L10(L12)X complex. One or more lysine residues are methylated.

Functionally, forms part of the ribosomal stalk which helps the ribosome interact with GTP-bound translation factors. The polypeptide is Large ribosomal subunit protein uL11 (Leptospira interrogans serogroup Icterohaemorrhagiae serovar copenhageni (strain Fiocruz L1-130)).